Here is a 359-residue protein sequence, read N- to C-terminus: Chorismate synthase (359 aa).

Arg47 provides a ligand contact to NADP(+). FMN contacts are provided by residues 123 to 125 (RSS), Gly283, 298 to 302 (KPTSS), and Arg326.

The protein belongs to the chorismate synthase family. In terms of assembly, homotetramer. FMNH2 is required as a cofactor.

It carries out the reaction 5-O-(1-carboxyvinyl)-3-phosphoshikimate = chorismate + phosphate. Its pathway is metabolic intermediate biosynthesis; chorismate biosynthesis; chorismate from D-erythrose 4-phosphate and phosphoenolpyruvate: step 7/7. Functionally, catalyzes the anti-1,4-elimination of the C-3 phosphate and the C-6 proR hydrogen from 5-enolpyruvylshikimate-3-phosphate (EPSP) to yield chorismate, which is the branch point compound that serves as the starting substrate for the three terminal pathways of aromatic amino acid biosynthesis. This reaction introduces a second double bond into the aromatic ring system. This Chlamydia pneumoniae (Chlamydophila pneumoniae) protein is Chorismate synthase.